The following is a 558-amino-acid chain: Dihydroxy-acid dehydratase (558 aa).

Asp-78 contributes to the Mg(2+) binding site. Residue Cys-119 participates in [2Fe-2S] cluster binding. 2 residues coordinate Mg(2+): Asp-120 and Lys-121. Lys-121 carries the N6-carboxylysine modification. Cys-192 contacts [2Fe-2S] cluster. Glu-446 is a Mg(2+) binding site. Ser-472 acts as the Proton acceptor in catalysis.

It belongs to the IlvD/Edd family. Homodimer. It depends on [2Fe-2S] cluster as a cofactor. The cofactor is Mg(2+).

It carries out the reaction (2R)-2,3-dihydroxy-3-methylbutanoate = 3-methyl-2-oxobutanoate + H2O. The catalysed reaction is (2R,3R)-2,3-dihydroxy-3-methylpentanoate = (S)-3-methyl-2-oxopentanoate + H2O. Its pathway is amino-acid biosynthesis; L-isoleucine biosynthesis; L-isoleucine from 2-oxobutanoate: step 3/4. It participates in amino-acid biosynthesis; L-valine biosynthesis; L-valine from pyruvate: step 3/4. Functions in the biosynthesis of branched-chain amino acids. Catalyzes the dehydration of (2R,3R)-2,3-dihydroxy-3-methylpentanoate (2,3-dihydroxy-3-methylvalerate) into 2-oxo-3-methylpentanoate (2-oxo-3-methylvalerate) and of (2R)-2,3-dihydroxy-3-methylbutanoate (2,3-dihydroxyisovalerate) into 2-oxo-3-methylbutanoate (2-oxoisovalerate), the penultimate precursor to L-isoleucine and L-valine, respectively. The protein is Dihydroxy-acid dehydratase of Campylobacter jejuni subsp. jejuni serotype O:23/36 (strain 81-176).